A 613-amino-acid chain; its full sequence is Ethylene response sensor 1 (613 aa).

3 helical membrane passes run 23 to 43 (ISDA…IYFV), 58 to 78 (FGAF…MFFM), and 95 to 115 (AVVS…LLSV). 2 residues coordinate Cu cation: Cys-65 and His-69. A GAF domain is found at 158-307 (DRHTILRTTL…NVADQVAVAL (150 aa)). Residues 350 to 589 (VMNHEMRTPM…SFIIRLGICN (240 aa)) form the Histidine kinase domain. The residue at position 353 (His-353) is a Phosphohistidine; by autocatalysis.

Belongs to the ethylene receptor family. In terms of assembly, homodimer; disulfide-linked. Heteromer with ETR1. Cu cation is required as a cofactor. In terms of processing, autophosphorylated on both His and Ser residues in the presence of manganese. Loss of His autophosphorylation in the presence of both manganese and magnesium. As to expression, expressed in etiolated seedlings, leaves, stems, roots, flowers, embryos, anthers, carpels and ovules.

The protein resides in the endoplasmic reticulum membrane. It catalyses the reaction ATP + protein L-histidine = ADP + protein N-phospho-L-histidine.. In terms of biological role, ethylene receptor related to bacterial two-component regulators. Acts as a redundant negative regulator of ethylene signaling. This Arabidopsis thaliana (Mouse-ear cress) protein is Ethylene response sensor 1 (ERS1).